The chain runs to 154 residues: Large ribosomal subunit protein uL30 (154 aa).

The protein belongs to the universal ribosomal protein uL30 family. Part of the 50S ribosomal subunit.

The sequence is that of Large ribosomal subunit protein uL30 from Methanococcus maripaludis (strain DSM 14266 / JCM 13030 / NBRC 101832 / S2 / LL).